The sequence spans 254 residues: Tyrosine-protein phosphatase YwqE (254 aa).

This sequence belongs to the metallo-dependent hydrolases superfamily. CpsB/CapC family. It depends on Mn(2+) as a cofactor.

It catalyses the reaction O-phospho-L-tyrosyl-[protein] + H2O = L-tyrosyl-[protein] + phosphate. Its activity is regulated as follows. Inhibited by vanadate and sodium pyrophosphate. Not inhibited by sodium fluoride. Its function is as follows. Dephosphorylates the phosphotyrosine-containing proteins YwqD, YwqF and Ssb. In Bacillus subtilis (strain 168), this protein is Tyrosine-protein phosphatase YwqE (ywqE).